The primary structure comprises 39 residues: Potassium channel toxin alpha-KTx 2.1 (39 aa).

Disulfide bonds link cysteine 7–cysteine 29, cysteine 13–cysteine 34, and cysteine 17–cysteine 36. The tract at residues 26–34 (GAKCMNGKC) is interaction with Ca(2+)-activated K(+) channels. Asparagine 39 carries the post-translational modification Asparagine amide.

Belongs to the short scorpion toxin superfamily. Potassium channel inhibitor family. Alpha-KTx 02 subfamily. In terms of tissue distribution, expressed by the venom gland.

The protein resides in the secreted. Functionally, blocks voltage-gated potassium channels (mKv1.1/KCNA1 (Kd&gt;25 nM), rKv1.2/KCNA2 (Kd=2 nM), mKv1.3/KCNA3 (Kd=1 nM), hKv1.5/KCNA5 (Kd&gt;25 nM) and mKv3.1/KCNC1 (Kd&gt;25 nM)) and calcium-activated potassium channels (KCa1.1/KCNMA1 and KCa3.1/KCNN4, Kd&gt;25 nM). This Centruroides noxius (Mexican scorpion) protein is Potassium channel toxin alpha-KTx 2.1.